Consider the following 343-residue polypeptide: Protein RecA (343 aa).

64-71 contacts ATP; it reads GPESSGKT.

It belongs to the RecA family.

Its subcellular location is the cytoplasm. Functionally, can catalyze the hydrolysis of ATP in the presence of single-stranded DNA, the ATP-dependent uptake of single-stranded DNA by duplex DNA, and the ATP-dependent hybridization of homologous single-stranded DNAs. It interacts with LexA causing its activation and leading to its autocatalytic cleavage. The protein is Protein RecA of Bacillus thuringiensis (strain Al Hakam).